Reading from the N-terminus, the 274-residue chain is Bis(5'-nucleosyl)-tetraphosphatase, symmetrical (274 aa).

Belongs to the Ap4A hydrolase family.

It carries out the reaction P(1),P(4)-bis(5'-adenosyl) tetraphosphate + H2O = 2 ADP + 2 H(+). Its function is as follows. Hydrolyzes diadenosine 5',5'''-P1,P4-tetraphosphate to yield ADP. This is Bis(5'-nucleosyl)-tetraphosphatase, symmetrical from Shewanella sp. (strain MR-7).